Consider the following 369-residue polypeptide: Biotin synthase (369 aa).

The Radical SAM core domain maps to 51-269 (NYVQVSTLLS…IAVARIMMPK (219 aa)). 3 residues coordinate [4Fe-4S] cluster: C66, C70, and C73. Positions 110, 141, 201, and 273 each coordinate [2Fe-2S] cluster.

It belongs to the radical SAM superfamily. Biotin synthase family. As to quaternary structure, homodimer. It depends on [4Fe-4S] cluster as a cofactor. [2Fe-2S] cluster is required as a cofactor.

It catalyses the reaction (4R,5S)-dethiobiotin + (sulfur carrier)-SH + 2 reduced [2Fe-2S]-[ferredoxin] + 2 S-adenosyl-L-methionine = (sulfur carrier)-H + biotin + 2 5'-deoxyadenosine + 2 L-methionine + 2 oxidized [2Fe-2S]-[ferredoxin]. It participates in cofactor biosynthesis; biotin biosynthesis; biotin from 7,8-diaminononanoate: step 2/2. Its function is as follows. Catalyzes the conversion of dethiobiotin (DTB) to biotin by the insertion of a sulfur atom into dethiobiotin via a radical-based mechanism. This Pseudoalteromonas atlantica (strain T6c / ATCC BAA-1087) protein is Biotin synthase.